Reading from the N-terminus, the 237-residue chain is Ribonuclease PH (237 aa).

Phosphate contacts are provided by residues R86 and 124 to 126 (GTR).

Belongs to the RNase PH family. As to quaternary structure, homohexameric ring arranged as a trimer of dimers.

The enzyme catalyses tRNA(n+1) + phosphate = tRNA(n) + a ribonucleoside 5'-diphosphate. In terms of biological role, phosphorolytic 3'-5' exoribonuclease that plays an important role in tRNA 3'-end maturation. Removes nucleotide residues following the 3'-CCA terminus of tRNAs; can also add nucleotides to the ends of RNA molecules by using nucleoside diphosphates as substrates, but this may not be physiologically important. Probably plays a role in initiation of 16S rRNA degradation (leading to ribosome degradation) during starvation. In Tolumonas auensis (strain DSM 9187 / NBRC 110442 / TA 4), this protein is Ribonuclease PH.